The primary structure comprises 198 residues: HTH-type transcriptional regulator BetI (198 aa).

Residues 8–68 (PLRRRELIDA…ATMRHLLREL (61 aa)) enclose the HTH tetR-type domain. The segment at residues 31–50 (TVAQIAHEAGVSPALAHHYF) is a DNA-binding region (H-T-H motif).

It participates in amine and polyamine biosynthesis; betaine biosynthesis via choline pathway [regulation]. Repressor involved in the biosynthesis of the osmoprotectant glycine betaine. It represses transcription of the choline transporter BetT and the genes of BetAB involved in the synthesis of glycine betaine. In Brucella abortus (strain 2308), this protein is HTH-type transcriptional regulator BetI.